Reading from the N-terminus, the 446-residue chain is Histidine--tRNA ligase (446 aa).

It belongs to the class-II aminoacyl-tRNA synthetase family. In terms of assembly, homodimer.

Its subcellular location is the cytoplasm. It carries out the reaction tRNA(His) + L-histidine + ATP = L-histidyl-tRNA(His) + AMP + diphosphate + H(+). The polypeptide is Histidine--tRNA ligase (Paraburkholderia phymatum (strain DSM 17167 / CIP 108236 / LMG 21445 / STM815) (Burkholderia phymatum)).